Here is a 423-residue protein sequence, read N- to C-terminus: Dihydroorotase (423 aa).

His-60 and His-62 together coordinate Zn(2+). Substrate is bound by residues 62–64 (HFR) and Asn-94. Zn(2+) contacts are provided by Asp-151, His-178, and His-231. Residue Asn-277 participates in substrate binding. Position 304 (Asp-304) interacts with Zn(2+). Asp-304 is a catalytic residue. His-308 is a binding site for substrate.

Belongs to the metallo-dependent hydrolases superfamily. DHOase family. Class I DHOase subfamily. Requires Zn(2+) as cofactor.

It carries out the reaction (S)-dihydroorotate + H2O = N-carbamoyl-L-aspartate + H(+). It functions in the pathway pyrimidine metabolism; UMP biosynthesis via de novo pathway; (S)-dihydroorotate from bicarbonate: step 3/3. In terms of biological role, catalyzes the reversible cyclization of carbamoyl aspartate to dihydroorotate. The chain is Dihydroorotase from Lactococcus lactis subsp. lactis (strain IL1403) (Streptococcus lactis).